The sequence spans 617 residues: V-type proton ATPase catalytic subunit A (617 aa).

N-acetylalanine is present on Asp-2. The residue at position 136 (Thr-136) is a Phosphothreonine. 250–257 (GAFGCGKT) serves as a coordination point for ATP. Ser-384 is subject to Phosphoserine; by AMPK.

The protein belongs to the ATPase alpha/beta chains family. In terms of assembly, V-ATPase is a heteromultimeric enzyme made up of two complexes: the ATP-hydrolytic V1 complex and the proton translocation V0 complex. The V1 complex consists of three catalytic AB heterodimers that form a heterohexamer, three peripheral stalks each consisting of EG heterodimers, one central rotor including subunits D and F, and the regulatory subunits C and H. The proton translocation complex V0 consists of the proton transport subunit a, a ring of proteolipid subunits c9c'', rotary subunit d, subunits e and f, and the accessory subunits ATP6AP1/Ac45 and ATP6AP2/PRR. Interacts with the V0 complex V-ATPase subunit a4 ATP6V0A4. Interacts with WFS1. Interacts with alpha-crystallin B chain/CRYAB and with MTOR, forming a ternary complex. (Microbial infection) Interacts with Rabies virus protein M; this interaction promotes virion uncoating. Phosphorylation at Ser-384 by AMPK down-regulates its enzyme activity. As to expression, high expression in the skin.

The protein resides in the cytoplasm. The protein localises to the cytosol. It is found in the cytoplasmic vesicle. It localises to the secretory vesicle. Its subcellular location is the clathrin-coated vesicle membrane. The protein resides in the lysosome. The catalysed reaction is ATP + H2O + 4 H(+)(in) = ADP + phosphate + 5 H(+)(out). Its activity is regulated as follows. ATP hydrolysis occurs at the interface between the nucleotide-binding domains of subunits A and B. ATP hydrolysis triggers a conformational change in the subunits D and F, which induces a shift of subunit d. The c-ring is subsequently rotated and results in a continuous proton translocation across the membrane. Functionally, catalytic subunit of the V1 complex of vacuolar(H+)-ATPase (V-ATPase), a multisubunit enzyme composed of a peripheral complex (V1) that hydrolyzes ATP and a membrane integral complex (V0) that translocates protons. V-ATPase is responsible for acidifying and maintaining the pH of intracellular compartments and in some cell types, is targeted to the plasma membrane, where it is responsible for acidifying the extracellular environment. In aerobic conditions, involved in intracellular iron homeostasis, thus triggering the activity of Fe(2+) prolyl hydroxylase (PHD) enzymes, and leading to HIF1A hydroxylation and subsequent proteasomal degradation. May play a role in neurite development and synaptic connectivity. (Microbial infection) Plays an important role in virion uncoating during Rabies virus replication after membrane fusion. Specifically, participates in the dissociation of incoming viral matrix M proteins uncoating through direct interaction. This Homo sapiens (Human) protein is V-type proton ATPase catalytic subunit A (ATP6V1A).